The chain runs to 704 residues: Glycine--tRNA ligase beta subunit (704 aa).

The protein belongs to the class-II aminoacyl-tRNA synthetase family. As to quaternary structure, tetramer of two alpha and two beta subunits.

It is found in the cytoplasm. The catalysed reaction is tRNA(Gly) + glycine + ATP = glycyl-tRNA(Gly) + AMP + diphosphate. This chain is Glycine--tRNA ligase beta subunit, found in Rhizobium etli (strain ATCC 51251 / DSM 11541 / JCM 21823 / NBRC 15573 / CFN 42).